The following is a 193-amino-acid chain: MTEEKNTNTEKTAKKKTNTYLEWGKAIVIAVLLALLIRHFLFEPYLVEGSSMYPTLHDGERLFVNKTVNYIGELKRGDIVIINGETSKIHYVKRLIGKPGETVQMKDDTLYINGKKVAEPYLSKNKKEAEKLGVSLTGDFGPVKVPKGKYFVMGDNRLNSMDSRNGLGLIAEDRIVGTSKFVFFPFNEMRQTK.

The Cytoplasmic portion of the chain corresponds to 1–25 (MTEEKNTNTEKTAKKKTNTYLEWGK). A helical membrane pass occupies residues 26-42 (AIVIAVLLALLIRHFLF). Residues 43 to 193 (EPYLVEGSSM…FPFNEMRQTK (151 aa)) lie on the Extracellular side of the membrane. Active-site residues include Ser-51 and Lys-93.

Belongs to the peptidase S26 family.

It is found in the cell membrane. It catalyses the reaction Cleavage of hydrophobic, N-terminal signal or leader sequences from secreted and periplasmic proteins.. The protein is Signal peptidase I T (sipT) of Bacillus subtilis (strain 168).